The following is an 88-amino-acid chain: uncharacterized protein (88 aa).

The protein belongs to the phD/YefM antitoxin family.

This is an uncharacterized protein from Sinorhizobium fredii (strain NBRC 101917 / NGR234).